The chain runs to 85 residues: Large ribosomal subunit protein bL27 (85 aa).

Residues 1–21 are disordered; that stretch reads MAHKKAGGSTRNGRDSESKRL.

It belongs to the bacterial ribosomal protein bL27 family.

The chain is Large ribosomal subunit protein bL27 from Photorhabdus laumondii subsp. laumondii (strain DSM 15139 / CIP 105565 / TT01) (Photorhabdus luminescens subsp. laumondii).